The primary structure comprises 95 residues: Small ribosomal subunit protein bS16 (95 aa).

Belongs to the bacterial ribosomal protein bS16 family.

This is Small ribosomal subunit protein bS16 from Thermotoga maritima (strain ATCC 43589 / DSM 3109 / JCM 10099 / NBRC 100826 / MSB8).